Here is a 289-residue protein sequence, read N- to C-terminus: 4-hydroxy-tetrahydrodipicolinate synthase (289 aa).

Residue T43 participates in pyruvate binding. Y131 (proton donor/acceptor) is an active-site residue. The active-site Schiff-base intermediate with substrate is the K160. Residue V200 participates in pyruvate binding.

Belongs to the DapA family. Homotetramer; dimer of dimers.

It is found in the cytoplasm. The catalysed reaction is L-aspartate 4-semialdehyde + pyruvate = (2S,4S)-4-hydroxy-2,3,4,5-tetrahydrodipicolinate + H2O + H(+). It participates in amino-acid biosynthesis; L-lysine biosynthesis via DAP pathway; (S)-tetrahydrodipicolinate from L-aspartate: step 3/4. Functionally, catalyzes the condensation of (S)-aspartate-beta-semialdehyde [(S)-ASA] and pyruvate to 4-hydroxy-tetrahydrodipicolinate (HTPA). This is 4-hydroxy-tetrahydrodipicolinate synthase from Methanococcus maripaludis (strain DSM 14266 / JCM 13030 / NBRC 101832 / S2 / LL).